The primary structure comprises 624 residues: Polycomb group protein EMF2A (624 aa).

The C2H2-type zinc-finger motif lies at 338-359 (CPFCLVRCGNFKGLECHMTSSH). Positions 420–445 (DAHIMESGSPEETQAESEDDVQEENE) are disordered. Over residues 432–445 (TQAESEDDVQEENE) the composition is skewed to acidic residues. The interval 474 to 609 (LSANRADPRN…SARTMDTCNR (136 aa)) is VEFS-box.

It belongs to the VEFS (VRN2-EMF2-FIS2-SU(Z)12) family. In terms of assembly, component of the polycomb repressive complex 2 (PRC2), which methylates 'Lys-27' residues of histone H3 (H3K27me3), leading to transcriptional repression of the affected target gene. Widely expressed. Highly expressed in shoot apical meristem and inflorescence meristem. Expressed in roots, leaves and immature seeds.

Polycomb group (PcG) protein. PcG proteins act by forming multiprotein complexes, which are required to maintain the transcriptionally repressive state of homeotic genes throughout development. PcG proteins are not required to initiate repression, but to maintain it during later stages of development. They act via the methylation of histones, rendering chromatin heritably changed in its expressibility. This Oryza sativa subsp. japonica (Rice) protein is Polycomb group protein EMF2A.